The primary structure comprises 129 residues: Small ribosomal subunit protein uS11 (129 aa).

It belongs to the universal ribosomal protein uS11 family. Part of the 30S ribosomal subunit. Interacts with proteins S7 and S18. Binds to IF-3.

Located on the platform of the 30S subunit, it bridges several disparate RNA helices of the 16S rRNA. Forms part of the Shine-Dalgarno cleft in the 70S ribosome. In Bartonella quintana (strain Toulouse) (Rochalimaea quintana), this protein is Small ribosomal subunit protein uS11.